A 136-amino-acid chain; its full sequence is Large ribosomal subunit protein uL16 (136 aa).

This sequence belongs to the universal ribosomal protein uL16 family. In terms of assembly, part of the 50S ribosomal subunit.

Functionally, binds 23S rRNA and is also seen to make contacts with the A and possibly P site tRNAs. In Mannheimia succiniciproducens (strain KCTC 0769BP / MBEL55E), this protein is Large ribosomal subunit protein uL16.